A 193-amino-acid polypeptide reads, in one-letter code: MSIETSEATVKIAPRLKTRYADEIKKTLQDDFSYVNVNQVPRLVKVVVNMGVGEAARDSKVIDGAVRDLTLITGQKPMVTKARKSIAQFKLREGMPIGAHTTLRGDRMWEFVDRLVTLALPRIRDFRGLSGKQFDGNGNYTFGLTEQVMFHEIDQDAIDKIRGMDITVVTTAKTDDEGRALLKALGFPFKSED.

This sequence belongs to the universal ribosomal protein uL5 family. As to quaternary structure, part of the 50S ribosomal subunit; part of the 5S rRNA/L5/L18/L25 subcomplex. Contacts the 5S rRNA and the P site tRNA. Forms a bridge to the 30S subunit in the 70S ribosome.

In terms of biological role, this is one of the proteins that bind and probably mediate the attachment of the 5S RNA into the large ribosomal subunit, where it forms part of the central protuberance. In the 70S ribosome it contacts protein S13 of the 30S subunit (bridge B1b), connecting the 2 subunits; this bridge is implicated in subunit movement. Contacts the P site tRNA; the 5S rRNA and some of its associated proteins might help stabilize positioning of ribosome-bound tRNAs. This is Large ribosomal subunit protein uL5 from Renibacterium salmoninarum (strain ATCC 33209 / DSM 20767 / JCM 11484 / NBRC 15589 / NCIMB 2235).